Consider the following 408-residue polypeptide: Secreted mono- and diacylglycerol lipase 2 (408 aa).

An N-terminal signal peptide occupies residues 1-24 (MRFKLADSLSLITVQLILATSTLA). Asparagine 177 carries an N-linked (GlcNAc...) asparagine glycan. The active-site Nucleophile is serine 217. Active-site residues include aspartate 283 and histidine 374.

This sequence belongs to the AB hydrolase superfamily. Lipase family. Class 3 subfamily.

It is found in the secreted. The catalysed reaction is a monoacylglycerol + H2O = glycerol + a fatty acid + H(+). It catalyses the reaction a diacylglycerol + H2O = a monoacylglycerol + a fatty acid + H(+). Functionally, secreted mono- and diacylglycerol lipase involved in plant virulence. Has a substrate preference for p-nitrophenyl esters with a carbon chain length of C10 (p-nitrophenyl caprate). The chain is Secreted mono- and diacylglycerol lipase 2 from Gibberella zeae (strain ATCC MYA-4620 / CBS 123657 / FGSC 9075 / NRRL 31084 / PH-1) (Wheat head blight fungus).